We begin with the raw amino-acid sequence, 478 residues long: uncharacterized protein (478 aa).

Positions Met2–Glu120 constitute an RCK N-terminal domain.

This is an uncharacterized protein from Methanocaldococcus jannaschii (strain ATCC 43067 / DSM 2661 / JAL-1 / JCM 10045 / NBRC 100440) (Methanococcus jannaschii).